The primary structure comprises 416 residues: E3 ubiquitin-protein ligase RNFT1 (416 aa).

Residues 27–45 (QSSSGHTHHQPGSNDSPSV) show a composition bias toward polar residues. Disordered stretches follow at residues 27 to 50 (QSSSGHTHHQPGSNDSPSVCMSLP) and 63 to 116 (GDVT…ADSR). Basic residues predominate over residues 77 to 86 (GARSSSRRVR). 6 helical membrane-spanning segments follow: residues 146–166 (LVVQHITGISVGIGLLTTFLY), 184–204 (LQCLWILVFLLFSSLLLYYTF), 214–234 (VFMNPSLGPLHFFDALWVVGI), 237–257 (FIGKFFFMGLKCIILLVPSFV), 265–287 (YWYMALEEVAQCYCMLVSTPVWF), and 302–322 (WHFGILLALLYLILKLLIIFG). Residues 349 to 400 (CSEVDGMCAICQAEFIKPIVLVCQHVFCEECISLWFNKEKTCPLCRTVISNQ) form a required for ubiquitin ligase activity and for protection against ER stress-induced cell death region. The segment at 356–394 (CAICQAEFIKPIVLVCQHVFCEECISLWFNKEKTCPLCR) adopts an RING-type zinc-finger fold.

Its subcellular location is the endoplasmic reticulum membrane. It catalyses the reaction S-ubiquitinyl-[E2 ubiquitin-conjugating enzyme]-L-cysteine + [acceptor protein]-L-lysine = [E2 ubiquitin-conjugating enzyme]-L-cysteine + N(6)-ubiquitinyl-[acceptor protein]-L-lysine.. It functions in the pathway protein modification; protein ubiquitination. Functionally, E3 ubiquitin-protein ligase that acts in the endoplasmic reticulum (ER)-associated degradation (ERAD) pathway, which targets misfolded proteins that accumulate in the endoplasmic reticulum (ER) for ubiquitination and subsequent proteasome-mediated degradation. Protects cells from ER stress-induced apoptosis. The sequence is that of E3 ubiquitin-protein ligase RNFT1 (rnft1) from Xenopus tropicalis (Western clawed frog).